The chain runs to 603 residues: Spastin (603 aa).

Positions 1 to 34 (MNSPGGRNNKKKPVTPAAETGPGPPTPPPPPAET) are disordered. The Cytoplasmic segment spans residues 1–54 (MNSPGGRNNKKKPVTPAAETGPGPPTPPPPPAETQVLLAPPSLHKRNLYLFSYP). Positions 22 to 32 (PGPPTPPPPPA) are enriched in pro residues. Positions 55 to 75 (LLAAFSLLRFLAFQLGLLFVW) form an intramembrane region, helical. The Cytoplasmic portion of the chain corresponds to 76–603 (FCERLSRRVM…WNKEFGDTTV (528 aa)). The MIT domain occupies 113-188 (YHQQAFQYIS…LMAKDRLQLL (76 aa)). Residues 216 to 294 (GLLKPEKGAV…RTNKPTTPTT (79 aa)) form a disordered region. Residues 219–231 (KPEKGAVPKKKDP) show a composition bias toward basic and acidic residues. The segment covering 281 to 294 (KNNTRTNKPTTPTT) has biased composition (low complexity). Residue 369 to 376 (GPPGNGKT) participates in ATP binding.

It belongs to the AAA ATPase family. Spastin subfamily. In terms of assembly, homohexamer. The homohexamer is stabilized by ATP-binding. The homohexamer may adopt a ring conformation through which microtubules pass prior to being severed. Interacts with microtubules.

It localises to the membrane. The protein resides in the cytoplasm. Its subcellular location is the cytoskeleton. The protein localises to the microtubule organizing center. It is found in the centrosome. It localises to the perinuclear region. The protein resides in the nucleus. The enzyme catalyses n ATP + n H2O + a microtubule = n ADP + n phosphate + (n+1) alpha/beta tubulin heterodimers.. Its function is as follows. ATP-dependent microtubule severing protein that specifically recognizes and cuts microtubules that are polyglutamylated. Preferentially recognizes and acts on microtubules decorated with short polyglutamate tails: severing activity increases as the number of glutamates per tubulin rises from one to eight, but decreases beyond this glutamylation threshold. Microtubule severing promotes reorganization of cellular microtubule arrays and the release of microtubules from the centrosome following nucleation. Required for membrane traffic from the endoplasmic reticulum (ER) to the Golgi and for completion of the abscission stage of cytokinesis. Also plays a role in axon growth and the formation of axonal branches. This is Spastin from Xenopus tropicalis (Western clawed frog).